The following is a 377-amino-acid chain: NADH dehydrogenase [ubiquinone] 1 alpha subcomplex subunit 9, mitochondrial (377 aa).

Residues 1–35 (MAAAVRFQVVRALPMSRPAISAAATSVFCSSSHRQ) constitute a mitochondrion transit peptide. Lys-175 carries the post-translational modification N6-succinyllysine. Residues Lys-189 and Lys-370 each carry the N6-acetyllysine modification.

It belongs to the complex I NDUFA9 subunit family. Complex I is composed of 45 different subunits. This a component of the hydrophobic protein fraction. Interacts with BLOC1S1. Interacts with SLC2A4. Interacts with CLOCK. Interacts with RAB5IF. Requires FAD as cofactor. In terms of processing, acetylated on lysine residues. BLOC1S1 is required for acetylation. Acetylated by CLOCK in a circadian manner. As to expression, expressed by the principal cells of the epididymis. Detected in flagella of epididymal sperm (at protein level).

It localises to the mitochondrion matrix. Accessory subunit of the mitochondrial membrane respiratory chain NADH dehydrogenase (Complex I), that is believed not to be involved in catalysis. Complex I functions in the transfer of electrons from NADH to the respiratory chain. The immediate electron acceptor for the enzyme is believed to be ubiquinone. In Rattus norvegicus (Rat), this protein is NADH dehydrogenase [ubiquinone] 1 alpha subcomplex subunit 9, mitochondrial.